A 118-amino-acid chain; its full sequence is Small ribosomal subunit protein uS13 (118 aa).

Residues 93–118 form a disordered region; sequence KKLPVRGQRTKTNARTRKGPRKLMKK.

Belongs to the universal ribosomal protein uS13 family. In terms of assembly, part of the 30S ribosomal subunit. Forms a loose heterodimer with protein S19. Forms two bridges to the 50S subunit in the 70S ribosome.

Its function is as follows. Located at the top of the head of the 30S subunit, it contacts several helices of the 16S rRNA. In the 70S ribosome it contacts the 23S rRNA (bridge B1a) and protein L5 of the 50S subunit (bridge B1b), connecting the 2 subunits; these bridges are implicated in subunit movement. Contacts the tRNAs in the A and P-sites. The chain is Small ribosomal subunit protein uS13 from Buchnera aphidicola subsp. Baizongia pistaciae (strain Bp).